Here is a 152-residue protein sequence, read N- to C-terminus: Ubiquitin-conjugating enzyme E2 B (152 aa).

A UBC core domain is found at P4–N150. C88 acts as the Glycyl thioester intermediate in catalysis.

The protein belongs to the ubiquitin-conjugating enzyme family. In terms of assembly, interacts with RAD18, UBR2 and WAC.

The protein resides in the cell membrane. Its subcellular location is the nucleus. It catalyses the reaction S-ubiquitinyl-[E1 ubiquitin-activating enzyme]-L-cysteine + [E2 ubiquitin-conjugating enzyme]-L-cysteine = [E1 ubiquitin-activating enzyme]-L-cysteine + S-ubiquitinyl-[E2 ubiquitin-conjugating enzyme]-L-cysteine.. Its pathway is protein modification; protein ubiquitination. Its function is as follows. E2 ubiquitin-conjugating enzyme that accepts ubiquitin from the ubiquitin-activating enzyme E1 and transfers it to a E3 ubiquitin-protein ligase. In vitro catalyzes 'Lys-11'-, as well as 'Lys-48'- and 'Lys-63'-linked polyubiquitination. Together with the E3 enzyme BRE1 (RNF20 and/or RNF40), plays a role in transcription regulation by catalyzing the monoubiquitination of histone H2B at 'Lys-120' to form H2BK120ub1. H2BK120ub1 gives a specific tag for epigenetic transcriptional activation, elongation by RNA polymerase II, telomeric silencing, and is also a prerequisite for H3K4me and H3K79me formation. May play a role in DNA repair. Associates to the E3 ligase RAD18 to form the UBE2B-RAD18 ubiquitin ligase complex involved in mono-ubiquitination of DNA-associated PCNA on 'Lys-164'. In association with the E3 enzyme UBR4, is involved in N-end rule-dependent protein degradation. May be involved in neurite outgrowth. The polypeptide is Ubiquitin-conjugating enzyme E2 B (UBE2B) (Bos taurus (Bovine)).